We begin with the raw amino-acid sequence, 1667 residues long: Myomesin-1 (1667 aa).

A phosphoserine mark is found at serine 124 and serine 142. Over residues 192–210 the composition is skewed to low complexity; it reads SKQSTASKQSATSKRTTST. The disordered stretch occupies residues 192 to 217; it reads SKQSTASKQSATSKRTTSTLQREETF. Ig-like C2-type domains follow at residues 258–349 and 376–478; these read PEFI…ASVV and PYGY…AYVF. 3 Fibronectin type-III domains span residues 492–587, 620–714, and 721–814; these read APLD…ALDP, PPTD…VVGD, and APGK…VKAA. The tract at residues 818–915 is disordered; it reads GVSPDVWPQL…PKKKKDPVAV (98 aa). Phosphoserine occurs at positions 863 and 867. The segment covering 885-894 has biased composition (low complexity); it reads EPLSSPPQEA. Fibronectin type-III domains follow at residues 918 to 1016 and 1023 to 1122; these read APYD…CEEW and PPHS…TRPG. Serine 1036 carries the phosphoserine modification. 3 Ig-like C2-type domains span residues 1114–1212, 1340–1426, and 1555–1644; these read PVVA…EEMK, PHFA…LKLV, and RVLG…FTVS.

As to quaternary structure, homodimer. Interacts with TTN/titin and PNKD. In terms of tissue distribution, ubiquitously expressed in all striated muscles. Expressed in all fiber types.

The protein resides in the cytoplasm. The protein localises to the myofibril. It is found in the sarcomere. Its subcellular location is the m line. Functionally, may link the intermediate filament cytoskeleton to the M-disk of the myofibrils in striated muscle. May also contact myosin filaments. Also binds beta-integrins. This Mus musculus (Mouse) protein is Myomesin-1 (Myom1).